The following is a 108-amino-acid chain: Peptidyl-prolyl cis-trans isomerase FKBP1C (108 aa).

Positions 20–108 constitute a PPIase FKBP-type domain; it reads SQTCVMHYTG…VFDVELLKLE (89 aa).

It belongs to the FKBP-type PPIase family. FKBP1 subfamily.

It carries out the reaction [protein]-peptidylproline (omega=180) = [protein]-peptidylproline (omega=0). Functionally, catalyzes the cis-trans isomerization of proline imidic peptide bonds in oligopeptides. This is Peptidyl-prolyl cis-trans isomerase FKBP1C from Homo sapiens (Human).